The following is a 98-amino-acid chain: Large ribosomal subunit protein uL23 (98 aa).

This sequence belongs to the universal ribosomal protein uL23 family. In terms of assembly, part of the 50S ribosomal subunit. Contacts protein L29, and trigger factor when it is bound to the ribosome.

Functionally, one of the early assembly proteins it binds 23S rRNA. One of the proteins that surrounds the polypeptide exit tunnel on the outside of the ribosome. Forms the main docking site for trigger factor binding to the ribosome. The sequence is that of Large ribosomal subunit protein uL23 from Koribacter versatilis (strain Ellin345).